The chain runs to 157 residues: Phosphopantetheine adenylyltransferase (157 aa).

Thr8 contacts substrate. Residues 8-9 (TF) and His16 contribute to the ATP site. Residues Lys40, Thr72, and Arg86 each coordinate substrate. Residues 87 to 89 (GLR), Glu97, and 122 to 128 (YSFLSSS) each bind ATP.

It belongs to the bacterial CoaD family. As to quaternary structure, homohexamer. Requires Mg(2+) as cofactor.

It localises to the cytoplasm. It carries out the reaction (R)-4'-phosphopantetheine + ATP + H(+) = 3'-dephospho-CoA + diphosphate. It functions in the pathway cofactor biosynthesis; coenzyme A biosynthesis; CoA from (R)-pantothenate: step 4/5. Functionally, reversibly transfers an adenylyl group from ATP to 4'-phosphopantetheine, yielding dephospho-CoA (dPCoA) and pyrophosphate. In Prochlorococcus marinus (strain AS9601), this protein is Phosphopantetheine adenylyltransferase.